The sequence spans 991 residues: Polyribonucleotide nucleotidyltransferase 2, mitochondrial (991 aa).

A mitochondrion-targeting transit peptide spans 1 to 39; it reads MSSIVNRASSASLPNFLAWRALGFRTICSGRLGFAPSVP. The KH domain maps to 609-667; the sequence is PRLATLKYSNDSLRTLIGPMGVLKRKIEVETGARLSIDNGTLTIVAKNQDVMEKAQEQV. An S1 motif 1 domain is found at 678 to 746; that stretch reads GGVYKGTVSS…VRGNIKLSRK (69 aa). Residues 813–865 are disordered; that stretch reads EAEKSSPVNDNDKPRRAATSKPDRKPKSTASKLIATQKEEEALESIAPEETSA. A compositionally biased stretch (basic and acidic residues) spans 822–838; sequence DNDKPRRAATSKPDRKP. The region spanning 925 to 987 is the S1 motif 2 domain; it reads GTEMTATVDH…GVPVMALVDE (63 aa).

Belongs to the polyribonucleotide nucleotidyltransferase family.

The protein localises to the mitochondrion. It carries out the reaction RNA(n+1) + phosphate = RNA(n) + a ribonucleoside 5'-diphosphate. In terms of biological role, involved in the 3'-end maturation of mitochondrial mRNAs, rRNAs and tRNAs. Functions as a poly(A) mRNA 3'-5' degrading phosphorylase and is required for the degradation of highly expressed transcripts of non-coding regions. This chain is Polyribonucleotide nucleotidyltransferase 2, mitochondrial (PNP2), found in Arabidopsis thaliana (Mouse-ear cress).